Reading from the N-terminus, the 174-residue chain is Protein MOTHER of FT and TFL1 homolog 2 (174 aa).

The protein belongs to the phosphatidylethanolamine-binding protein family.

Functionally, may form complexes with phosphorylated ligands by interfering with kinases and their effectors. This Oryza sativa subsp. japonica (Rice) protein is Protein MOTHER of FT and TFL1 homolog 2.